We begin with the raw amino-acid sequence, 410 residues long: Argininosuccinate synthase (410 aa).

Residues 13-21 (AYSGGLDTS) and alanine 40 each bind ATP. Residues tyrosine 91 and serine 96 each coordinate L-citrulline. Residue glycine 121 coordinates ATP. The L-aspartate site is built by threonine 123, asparagine 127, and aspartate 128. Position 127 (asparagine 127) interacts with L-citrulline. L-citrulline is bound by residues arginine 131, serine 182, serine 191, glutamate 267, and tyrosine 279.

The protein belongs to the argininosuccinate synthase family. Type 1 subfamily. As to quaternary structure, homotetramer.

Its subcellular location is the cytoplasm. It carries out the reaction L-citrulline + L-aspartate + ATP = 2-(N(omega)-L-arginino)succinate + AMP + diphosphate + H(+). It participates in amino-acid biosynthesis; L-arginine biosynthesis; L-arginine from L-ornithine and carbamoyl phosphate: step 2/3. The chain is Argininosuccinate synthase from Maricaulis maris (strain MCS10) (Caulobacter maris).